The sequence spans 319 residues: Ciliary microtubule inner protein 2A (319 aa).

The protein belongs to the CIMIP2 family. In terms of assembly, microtubule inner protein component of sperm flagellar doublet microtubules.

The protein resides in the cytoplasm. It is found in the cytoskeleton. Its subcellular location is the flagellum axoneme. Microtubule inner protein (MIP) part of the dynein-decorated doublet microtubules (DMTs) in flagellum axoneme. Binds to the intra-tubulin interfaces. This Mus musculus (Mouse) protein is Ciliary microtubule inner protein 2A (Cimip2a).